The primary structure comprises 444 residues: Prenyltransferase phnF (444 aa).

It belongs to the tryptophan dimethylallyltransferase family.

The enzyme catalyses 2,3,4,7,9-pentahydroxy-6-methyl-1H-phenalen-1-one + dimethylallyl diphosphate = 2,4,7,9-tetrahydroxy-6-methyl-8-(2-methylbut-3-en-2-yl)-1-oxo-1H-phenalen-3-ol + diphosphate. It participates in secondary metabolite biosynthesis. Its function is as follows. Prenyltransferase; part of the gene cluster that mediates the biosynthesis of phenalenones such as herqueinone, compounds that have been reported to treat tumors, bacterial infections and/or mycoses, and rheumatic diseases. The non-reducing polyketide synthase phnA synthesizes the heptaketide backbone and cyclizes it into the angular, hemiketal-containing naphtho-gamma-pyrone prephenalenone. The product template (PT) domain of phnA catalyzes only the C4-C9 aldol condensation, which is unprecedented among known PT domains. The transformation of prephenalenone to phenalenones requires an FAD-dependent monooxygenase phnB, which catalyzes the C2 aromatic hydroxylation of prephenalenone and ring opening of the gamma-pyrone ring simultaneously. Subsequent intramolecular deprotonation of C3 phenolic oxygen accelerates phenalenone ring closure to yield the tricyclic phenalenone core with a C2 hydroxylation. The prenyltransferase phnF further catalyzes reverse C-prenylation of phenalenone by direct electrophilic substitution at C6, or possibly via first a forward O-prenylation of a neighboring phenol in phenalenone, followed by a Claisen rearrangement. The hydroalkoxylation enzyme phnH catalyzes the 5-exo-trig cyclization via acid catalysis after the spontaneous deprotonation of 7-OH, which leads to the formation of the dihydrobenzofuran atrovenetin. Atrovenetin is further converted to deoxyherqueinone by the O-methyltransferase phnC which can methylate C2-OH to stabilize the northern portion of the phenalenone core. Finally, the oxidoreductase phnG converts deoxyherqueinone to herqueinone via C6 hydroxylation. The protein is Prenyltransferase phnF of Penicillium herquei.